The sequence spans 331 residues: MGPAPESSEFVHRTWVQCENESCLKWRLLSPAAAAAVNPSEPWYCFMNTDPSYSSCSVSEEDFPEESQFLENGYKFVYSQLPLGSLVLVKLRNWPSWPGILCPDPFKGKYVTYDQDGNVEKYYVEFLGDPHSTAWMSAAFVGHFSLTLEAADCTKKKRWYRSALEEAYQLYRCSAEQRLEVCCLSKPNRAKTDTKAAVVTKKGMQVSKINTEKKRPRVRKRKRDAALKCSVEIFCSDEALSKENMVVSETEGLLKELEKMLQQIQEPTAREDESQGEQLSQCSPESPTGSPFQSYHEEDYIVPDGAGLKAGEYIEIITNNLKKIDALISEF.

A CW-type zinc finger spans residues 9–64 (EFVHRTWVQCENESCLKWRLLSPAAAAAVNPSEPWYCFMNTDPSYSSCSVSEEDFP). Cysteine 18, cysteine 23, cysteine 45, and cysteine 56 together coordinate Zn(2+). Residues 83-147 (LGSLVLVKLR…AAFVGHFSLT (65 aa)) enclose the PWWP domain. Residues 264-295 (IQEPTAREDESQGEQLSQCSPESPTGSPFQSY) are disordered. A compositionally biased stretch (polar residues) spans 276 to 293 (GEQLSQCSPESPTGSPFQ).

Its function is as follows. Histone methylation reader which binds to non-methylated (H3K4me0), monomethylated (H3K4me1), dimethylated (H3K4me2) and trimethylated (H3K4me3) 'Lys-4' on histone H3. The order of binding preference is H3K4me3 &gt; H3K4me2 &gt; H3K4me1 &gt; H3K4me0. In Mus musculus (Mouse), this protein is Zinc finger CW-type PWWP domain protein 2 homolog (Zcwpw2).